Reading from the N-terminus, the 230-residue chain is Orotidine 5'-phosphate decarboxylase (230 aa).

Substrate is bound by residues aspartate 10, lysine 32, 59–68 (DLKYHDIPNT), threonine 119, arginine 180, glutamine 189, glycine 209, and arginine 210. The active-site Proton donor is lysine 61.

This sequence belongs to the OMP decarboxylase family. Type 1 subfamily. As to quaternary structure, homodimer.

The enzyme catalyses orotidine 5'-phosphate + H(+) = UMP + CO2. Its pathway is pyrimidine metabolism; UMP biosynthesis via de novo pathway; UMP from orotate: step 2/2. In terms of biological role, catalyzes the decarboxylation of orotidine 5'-monophosphate (OMP) to uridine 5'-monophosphate (UMP). In Haemophilus influenzae (strain PittEE), this protein is Orotidine 5'-phosphate decarboxylase.